Reading from the N-terminus, the 184-residue chain is Cytidylate kinase (184 aa).

8-16 lines the ATP pocket; it reads GQPGSGKTT.

Belongs to the cytidylate kinase family. Type 2 subfamily.

It is found in the cytoplasm. The enzyme catalyses CMP + ATP = CDP + ADP. It carries out the reaction dCMP + ATP = dCDP + ADP. This Pyrobaculum neutrophilum (strain DSM 2338 / JCM 9278 / NBRC 100436 / V24Sta) (Thermoproteus neutrophilus) protein is Cytidylate kinase.